The primary structure comprises 392 residues: Phosphopentomutase (392 aa).

The Mn(2+) site is built by Asp10, Asp282, His287, Asp323, His324, and His335.

It belongs to the phosphopentomutase family. Requires Mn(2+) as cofactor.

The protein localises to the cytoplasm. The enzyme catalyses 2-deoxy-alpha-D-ribose 1-phosphate = 2-deoxy-D-ribose 5-phosphate. It catalyses the reaction alpha-D-ribose 1-phosphate = D-ribose 5-phosphate. Its pathway is carbohydrate degradation; 2-deoxy-D-ribose 1-phosphate degradation; D-glyceraldehyde 3-phosphate and acetaldehyde from 2-deoxy-alpha-D-ribose 1-phosphate: step 1/2. Isomerase that catalyzes the conversion of deoxy-ribose 1-phosphate (dRib-1-P) and ribose 1-phosphate (Rib-1-P) to deoxy-ribose 5-phosphate (dRib-5-P) and ribose 5-phosphate (Rib-5-P), respectively. This chain is Phosphopentomutase, found in Dictyoglomus thermophilum (strain ATCC 35947 / DSM 3960 / H-6-12).